The chain runs to 334 residues: D-aspartate oxidase 1 (334 aa).

FAD is bound by residues Asp-35, Arg-36, Ser-43, Gly-307, and Thr-312. A Microbody targeting signal motif is present at residues 332–334; sequence SKL.

Belongs to the DAMOX/DASOX family. Requires FAD as cofactor. As to expression, expressed in the intestinal cells, hypodermis and in unidentified cells in the head in adult hermaphrodites.

Its subcellular location is the peroxisome matrix. The catalysed reaction is D-aspartate + O2 + H2O = oxaloacetate + H2O2 + NH4(+). It catalyses the reaction D-glutamate + O2 + H2O = H2O2 + 2-oxoglutarate + NH4(+). Not inhibited by potassium bromide or thiolactomycin. Its function is as follows. Selectively catalyzes the oxidative deamination of acidic amino acids. May play a role in the egg-laying events and early development of the worm, in addition to quality control of the germ cells. This is D-aspartate oxidase 1 (ddo-1) from Caenorhabditis elegans.